The sequence spans 89 residues: CRISPR-associated endoribonuclease Cas2 2 (89 aa).

D9 provides a ligand contact to Mg(2+).

It belongs to the CRISPR-associated endoribonuclease Cas2 protein family. As to quaternary structure, homodimer, forms a heterotetramer with a Cas1 homodimer. Mg(2+) is required as a cofactor.

In terms of biological role, CRISPR (clustered regularly interspaced short palindromic repeat), is an adaptive immune system that provides protection against mobile genetic elements (viruses, transposable elements and conjugative plasmids). CRISPR clusters contain sequences complementary to antecedent mobile elements and target invading nucleic acids. CRISPR clusters are transcribed and processed into CRISPR RNA (crRNA). Functions as a ssRNA-specific endoribonuclease. Involved in the integration of spacer DNA into the CRISPR cassette. The protein is CRISPR-associated endoribonuclease Cas2 2 of Methanospirillum hungatei JF-1 (strain ATCC 27890 / DSM 864 / NBRC 100397 / JF-1).